Consider the following 49-residue polypeptide: Large ribosomal subunit protein bL33 (49 aa).

The protein belongs to the bacterial ribosomal protein bL33 family.

This is Large ribosomal subunit protein bL33 from Clostridium botulinum (strain Alaska E43 / Type E3).